The following is a 353-amino-acid chain: DNA polymerase IV (353 aa).

Residues 4–185 (IIHVDMDCFF…LPLSKIPGVG (182 aa)) enclose the UmuC domain. Positions 8 and 103 each coordinate Mg(2+). Residue Glu104 is part of the active site.

This sequence belongs to the DNA polymerase type-Y family. Monomer. Mg(2+) is required as a cofactor.

The protein resides in the cytoplasm. The catalysed reaction is DNA(n) + a 2'-deoxyribonucleoside 5'-triphosphate = DNA(n+1) + diphosphate. Its function is as follows. Poorly processive, error-prone DNA polymerase involved in untargeted mutagenesis. Copies undamaged DNA at stalled replication forks, which arise in vivo from mismatched or misaligned primer ends. These misaligned primers can be extended by PolIV. Exhibits no 3'-5' exonuclease (proofreading) activity. May be involved in translesional synthesis, in conjunction with the beta clamp from PolIII. In Serratia proteamaculans (strain 568), this protein is DNA polymerase IV.